A 186-amino-acid polypeptide reads, in one-letter code: Ribosome maturation factor RimM (186 aa).

In terms of domain architecture, PRC barrel spans 103-174 (PEEYHYSDLI…ELQVQPPPGL (72 aa)).

This sequence belongs to the RimM family. As to quaternary structure, binds ribosomal protein uS19.

The protein localises to the cytoplasm. Its function is as follows. An accessory protein needed during the final step in the assembly of 30S ribosomal subunit, possibly for assembly of the head region. Essential for efficient processing of 16S rRNA. May be needed both before and after RbfA during the maturation of 16S rRNA. It has affinity for free ribosomal 30S subunits but not for 70S ribosomes. This Synechococcus sp. (strain JA-3-3Ab) (Cyanobacteria bacterium Yellowstone A-Prime) protein is Ribosome maturation factor RimM.